Here is a 278-residue protein sequence, read N- to C-terminus: Large ribosomal subunit protein uL2c (278 aa).

2 disordered regions span residues 32–56 (SLTS…HRGG) and 203–256 (QSIG…PTIG). Residues 209 to 220 (GSKRWQGKRPKV) show a composition bias toward basic residues.

This sequence belongs to the universal ribosomal protein uL2 family. In terms of assembly, part of the 50S ribosomal subunit.

It localises to the plastid. The protein resides in the chloroplast. The sequence is that of Large ribosomal subunit protein uL2c (rpl2) from Chara vulgaris (Common stonewort).